Consider the following 437-residue polypeptide: C-terminal-binding protein 2 (437 aa).

NAD(+) is bound by residues Ser-103, 183–188 (IGLGRI), Asp-207, 240–246 (CNLNEHN), 267–269 (TAR), and Asp-293. Residue Arg-269 is part of the active site. Glu-298 is a catalytic residue. His-318 serves as the catalytic Proton donor. 318–321 (HTAW) lines the NAD(+) pocket. The interval 410 to 437 (PLIPSVSHTPSPGQTTKPDPDREIPTDQ) is disordered. Over residues 415-426 (VSHTPSPGQTTK) the composition is skewed to polar residues. A compositionally biased stretch (basic and acidic residues) spans 427-437 (PDPDREIPTDQ).

Belongs to the D-isomer specific 2-hydroxyacid dehydrogenase family. Interacts with the C-terminus of tcf7l1-a via the consensus motifs P-X-[DNS]-L-[STVA].

It localises to the nucleus. In terms of biological role, corepressor targeting diverse transcription regulators. The protein is C-terminal-binding protein 2 (ctbp2) of Xenopus laevis (African clawed frog).